We begin with the raw amino-acid sequence, 481 residues long: Argininosuccinate lyase (481 aa).

This sequence belongs to the lyase 1 family. Argininosuccinate lyase subfamily.

It localises to the cytoplasm. It catalyses the reaction 2-(N(omega)-L-arginino)succinate = fumarate + L-arginine. It participates in amino-acid biosynthesis; L-arginine biosynthesis; L-arginine from L-ornithine and carbamoyl phosphate: step 3/3. This Kineococcus radiotolerans (strain ATCC BAA-149 / DSM 14245 / SRS30216) protein is Argininosuccinate lyase.